We begin with the raw amino-acid sequence, 557 residues long: Membrane protein insertase YidC (557 aa).

The next 5 membrane-spanning stretches (helical) occupy residues Thr-6–His-26, Ile-219–Asp-239, Ile-367–Phe-387, Leu-437–Leu-457, and Met-514–Val-534.

Belongs to the OXA1/ALB3/YidC family. Type 1 subfamily. Interacts with the Sec translocase complex via SecD. Specifically interacts with transmembrane segments of nascent integral membrane proteins during membrane integration.

It localises to the cell inner membrane. In terms of biological role, required for the insertion and/or proper folding and/or complex formation of integral membrane proteins into the membrane. Involved in integration of membrane proteins that insert both dependently and independently of the Sec translocase complex, as well as at least some lipoproteins. Aids folding of multispanning membrane proteins. The sequence is that of Membrane protein insertase YidC from Polynucleobacter asymbioticus (strain DSM 18221 / CIP 109841 / QLW-P1DMWA-1) (Polynucleobacter necessarius subsp. asymbioticus).